A 271-amino-acid polypeptide reads, in one-letter code: Pyrroline-5-carboxylate reductase (271 aa).

Belongs to the pyrroline-5-carboxylate reductase family.

The protein resides in the cytoplasm. It catalyses the reaction L-proline + NADP(+) = (S)-1-pyrroline-5-carboxylate + NADPH + 2 H(+). The catalysed reaction is L-proline + NAD(+) = (S)-1-pyrroline-5-carboxylate + NADH + 2 H(+). It functions in the pathway amino-acid biosynthesis; L-proline biosynthesis; L-proline from L-glutamate 5-semialdehyde: step 1/1. Catalyzes the reduction of 1-pyrroline-5-carboxylate (PCA) to L-proline. The protein is Pyrroline-5-carboxylate reductase of Haemophilus influenzae (strain ATCC 51907 / DSM 11121 / KW20 / Rd).